The sequence spans 563 residues: Tripeptidyl-peptidase 1 (563 aa).

The signal sequence occupies residues methionine 1–cysteine 19. Positions threonine 20–glycine 195 are cleaved as a propeptide — removed in mature form. Cysteine 111 and cysteine 122 are joined by a disulfide. The Peptidase S53 domain maps to glycine 199–proline 563. Residues asparagine 210 and asparagine 222 are each glycosylated (N-linked (GlcNAc...) asparagine). Residues glutamate 272 and aspartate 276 each act as charge relay system in the active site. N-linked (GlcNAc...) asparagine glycans are attached at residues asparagine 286, asparagine 313, and asparagine 443. Intrachain disulfides connect cysteine 365/cysteine 526 and cysteine 522/cysteine 537. Serine 475 functions as the Charge relay system in the catalytic mechanism. Positions 517 and 518 each coordinate Ca(2+). Residues glycine 539, glycine 541, and aspartate 543 each coordinate Ca(2+).

As to quaternary structure, monomer. Interacts with CLN5. Interacts with CLN3. Requires Ca(2+) as cofactor. Post-translationally, activated by autocatalytic proteolytical processing upon acidification. N-glycosylation is required for processing and activity.

The protein resides in the lysosome. It is found in the melanosome. It catalyses the reaction Release of an N-terminal tripeptide from a polypeptide, but also has endopeptidase activity.. In terms of biological role, lysosomal serine protease with tripeptidyl-peptidase I activity. May act as a non-specific lysosomal peptidase which generates tripeptides from the breakdown products produced by lysosomal proteinases. Requires substrates with an unsubstituted N-terminus. In Rattus norvegicus (Rat), this protein is Tripeptidyl-peptidase 1 (Tpp1).